The sequence spans 276 residues: Radial spoke head protein 9 homolog (276 aa).

Belongs to the flagellar radial spoke RSP9 family. Component of the axonemal radial spoke 1 (RS1) and 2 (RS2) complexes, at least composed of spoke head proteins RSPH1, RSPH3, RSPH9 and the cilia-specific component RSPH4A or sperm-specific component RSPH6A, spoke stalk proteins RSPH14, DNAJB13, DYDC1, ROPN1L and NME5, and the RS1 complex-specific anchor protein IQUB. Interacts with IQUB. Interacts with RSPH3B. Interacts with RSPH4A. Interacts with RSPH6A. Interacts with CFAP61. Interacts with LRRC23.

It localises to the cytoplasm. It is found in the cytoskeleton. Its subcellular location is the cilium axoneme. The protein resides in the flagellum axoneme. The protein localises to the cell projection. It localises to the kinocilium. Functionally, functions as part of axonemal radial spoke complexes that play an important part in the motility of sperm and cilia. Essential for both the radial spoke head assembly and the central pair microtubule stability in ependymal motile cilia. Required for motility of olfactory and neural cilia and for the structural integrity of ciliary axonemes in both 9+0 and 9+2 motile cilia. The sequence is that of Radial spoke head protein 9 homolog (RSPH9) from Homo sapiens (Human).